The sequence spans 272 residues: Phosphatidylglycerol--prolipoprotein diacylglyceryl transferase (272 aa).

Transmembrane regions (helical) follow at residues 24 to 44, 59 to 79, 102 to 122, and 129 to 149; these read WYGI…KWIA, YFIW…ILFY, FIGI…IASF, and GVKF…GYVF. Arg-151 is an a 1,2-diacyl-sn-glycero-3-phospho-(1'-sn-glycerol) binding site. A run of 3 helical transmembrane segments spans residues 180-200, 208-228, and 244-264; these read PSQL…LYAW, GQLG…AEFW, and MGQL…GYLA.

This sequence belongs to the Lgt family.

The protein localises to the cell inner membrane. The catalysed reaction is L-cysteinyl-[prolipoprotein] + a 1,2-diacyl-sn-glycero-3-phospho-(1'-sn-glycerol) = an S-1,2-diacyl-sn-glyceryl-L-cysteinyl-[prolipoprotein] + sn-glycerol 1-phosphate + H(+). The protein operates within protein modification; lipoprotein biosynthesis (diacylglyceryl transfer). Catalyzes the transfer of the diacylglyceryl group from phosphatidylglycerol to the sulfhydryl group of the N-terminal cysteine of a prolipoprotein, the first step in the formation of mature lipoproteins. This Wolinella succinogenes (strain ATCC 29543 / DSM 1740 / CCUG 13145 / JCM 31913 / LMG 7466 / NCTC 11488 / FDC 602W) (Vibrio succinogenes) protein is Phosphatidylglycerol--prolipoprotein diacylglyceryl transferase.